A 284-amino-acid polypeptide reads, in one-letter code: Co-chaperone protein DjlA (284 aa).

Residues 1-6 lie on the Periplasmic side of the membrane; it reads MHIFGK. The chain crosses the membrane as a helical span at residues 7-30; the sequence is ILGAFFGFLFGGPFGAIFGIFLGH. Topologically, residues 31–284 are cytoplasmic; sequence QFDKARRLNQ…ELIRKEKGIK (254 aa). The disordered stretch occupies residues 190–211; sequence QGGGFGGSQQQSHSGQQWQQPS. The segment covering 197–211 has biased composition (low complexity); that stretch reads SQQQSHSGQQWQQPS. The J domain maps to 218 to 284; that stretch reads DAYEVLGVSE…ELIRKEKGIK (67 aa).

Homodimer.

The protein resides in the cell inner membrane. Its function is as follows. Regulatory DnaK co-chaperone. Direct interaction between DnaK and DjlA is needed for the induction of the wcaABCDE operon, involved in the synthesis of a colanic acid polysaccharide capsule, possibly through activation of the RcsB/RcsC phosphotransfer signaling pathway. The colanic acid capsule may help the bacterium survive conditions outside the host. The protein is Co-chaperone protein DjlA of Vibrio cholerae serotype O1 (strain ATCC 39315 / El Tor Inaba N16961).